A 261-amino-acid chain; its full sequence is Kallikrein-1E2 (261 aa).

An N-terminal signal peptide occupies residues 1–17 (MWFLVLCLDLSLGETGA). The propeptide at 18 to 24 (LPPIQSR) is activation peptide. Residues 25–258 (IIGGWECEKH…HLKWIKETIE (234 aa)) form the Peptidase S1 domain. Cystine bridges form between Cys31–Cys173, Cys50–Cys66, Cys152–Cys219, Cys184–Cys198, and Cys209–Cys234. His65 acts as the Charge relay system in catalysis. Residue Asn79 is glycosylated (N-linked (GlcNAc...) asparagine). Residue Asp120 is the Charge relay system of the active site. The active-site Charge relay system is Ser213.

Belongs to the peptidase S1 family. Kallikrein subfamily. In terms of tissue distribution, detected in prostate and semen.

It is found in the secreted. It catalyses the reaction Preferential cleavage of Arg-|-Xaa bonds in small molecule substrates. Highly selective action to release kallidin (lysyl-bradykinin) from kininogen involves hydrolysis of Met-|-Xaa or Leu-|-Xaa.. Its function is as follows. Glandular kallikreins cleave Met-Lys and Arg-Ser bonds in kininogen to release Lys-bradykinin. The sequence is that of Kallikrein-1E2 (KLK1E2) from Equus caballus (Horse).